The chain runs to 221 residues: Retinitis pigmentosa 9 protein (221 aa).

Basic and acidic residues-rich tracts occupy residues 1–10 (MSSRPGREDV), 17–29 (RPREPPEQELQRR), and 60–69 (IKEDETKPED). The tract at residues 1–76 (MSSRPGREDV…PEDCIPDVPG (76 aa)) is disordered. Residues 1–155 (MSSRPGREDV…RDNKRHEKDV (155 aa)) are PIM1-binding. The CCHC-type zinc-finger motif lies at 104-122 (QCWRCKRYGHRTGDKECPF). Residue Lys-129 forms a Glycyl lysine isopeptide (Lys-Gly) (interchain with G-Cter in SUMO2) linkage. The span at 147 to 156 (DNKRHEKDVR) shows a compositional bias: basic and acidic residues. The interval 147–221 (DNKRHEKDVR…SKSNEGSDSE (75 aa)) is disordered. The segment covering 184–212 (KHKKKKKKEKHKKRKKEKKKKKKRKHKSS) has biased composition (basic residues). 2 positions are modified to phosphoserine; by PIM1: Ser-212 and Ser-214.

As to quaternary structure, binds to PIM1. Binds to ZNHIT4. In terms of tissue distribution, appears to be expressed in a wide range of tissues.

It is found in the nucleus. In terms of biological role, is thought to be a target protein for the PIM1 kinase. May play some roles in B-cell proliferation in association with PIM1. The polypeptide is Retinitis pigmentosa 9 protein (RP9) (Homo sapiens (Human)).